Reading from the N-terminus, the 533-residue chain is Putative phosphate permease HP_1491 (533 aa).

12 consecutive transmembrane segments (helical) span residues 23 to 43 (IALALLFLIGAALLALIFGQA), 47 to 67 (GLLLIFAAVIGGYMAMNIGAN), 81 to 101 (AISMGGAILIAAICEMLGAII), 129 to 149 (VMLASLLSGALWLHVATLIGA), 156 to 176 (SVVGGIMGAGMAAAGMVAVNW), 182 to 202 (IVASWVISPLMGALIAMFFLM), 221 to 241 (VVPYLVALMSLTFSWYLIVKV), 248 to 268 (LNFEIQLACGCILALLIFILF), 286 to 306 (INELFNVPLIFAAALLSFAHG), 338 to 358 (VPLWIMVVGAAGIALGLSLYG), 372 to 392 (LDKMQAFCIALSAVITVLLAS), and 509 to 529 (LVTVPVSALLGALLFVALGFI).

The protein belongs to the inorganic phosphate transporter (PiT) (TC 2.A.20) family.

The protein localises to the cell membrane. In terms of biological role, potential transporter for phosphate. The polypeptide is Putative phosphate permease HP_1491 (Helicobacter pylori (strain ATCC 700392 / 26695) (Campylobacter pylori)).